Reading from the N-terminus, the 500-residue chain is MFISEAIGPEDRFDAVLIGAGIMSSTLAVLLHELDPCMRILIVERLDSPALESTSAFNNSGTGHAANCEFNYTPLQSNGRIEIEKALSINSSFERSLEFWASLAEMGRISPATFLNFLPHISFVWKEADLDFLKQRYLQLSSEVAFQRMEWSDDKAELKEWMPIVMQGRPTSEKVAATRIQRGTDVDFGALTRAYFDSLEESGSVHIRLSTEVIDIQRFGQDPWKLFLKSDLNSYCVEGKFVFLGAGGGALSLLQKSGIPEGKFYGGFPVSGQWLVCNETQVTNNHNAKVYGNADVGSPPMSVPHLDTRWIRGRKSLLFGPFAGFNTKFLKYGSNWDLFRSIQMGNVGAMVQAGLENIDLIKYLYGQLQQDHISRVDSLQNFLPNAKSKDWHLSLAGQRVQIIKKTSKGGKLKMGTEMVSSSDGSLAALLGASPGASTAVAIMIDLLRSSWGEKMSTKIWQDRLRRLIPSFGEDLNSNESMLKATRDRNDSLLGFGEKNQ.

This sequence belongs to the MQO family. FAD is required as a cofactor.

The catalysed reaction is (S)-malate + a quinone = a quinol + oxaloacetate. It participates in carbohydrate metabolism; tricarboxylic acid cycle; oxaloacetate from (S)-malate (quinone route): step 1/1. The protein is Probable malate:quinone oxidoreductase of Prochlorococcus marinus (strain MIT 9211).